The sequence spans 446 residues: Mannosyltransferase KTR6 (446 aa).

The Cytoplasmic portion of the chain corresponds to 1–8; it reads MHVLLSKK. Residues 9-29 traverse the membrane as a helical; Signal-anchor for type II membrane protein segment; the sequence is IARFLLISFVFVLALMVTINH. A stem region region spans residues 30-114; it reads PKTKQMSEQY…MVPSYINHRG (85 aa). Topologically, residues 30 to 446 are lumenal; sequence PKTKQMSEQY…DKPEGWDRLP (417 aa). N-linked (GlcNAc...) asparagine glycosylation is found at asparagine 82 and asparagine 98. The segment at 115-446 is catalytic; the sequence is SPPKACFVSL…DKPEGWDRLP (332 aa). Glutamate 334 serves as the catalytic Nucleophile.

It belongs to the glycosyltransferase 15 family.

It localises to the membrane. The protein operates within protein modification; protein glycosylation. Its function is as follows. Glycosyltransferase that transfers an alpha-D-mannosyl residue from GDP-mannose into lipid-linked oligosaccharide, forming an alpha-(1-&gt;2)-D-mannosyl-D-mannose linkage. Required for addition of mannosylphosphate in yeast mannan. Recognizes any oligosaccharides with at least one alpha-1,2-linked mannobiose unit. The chain is Mannosyltransferase KTR6 (KTR6) from Saccharomyces cerevisiae (strain ATCC 204508 / S288c) (Baker's yeast).